A 1481-amino-acid polypeptide reads, in one-letter code: Cystic fibrosis transmembrane conductance regulator (1481 aa).

Residues 1–77 (MQRSPLEKAS…KLINALRRCF (77 aa)) are Cytoplasmic-facing. The helical transmembrane segment at 78 to 98 (FWRFTFYGILLYLGEVTKAVQ) threads the bilayer. In terms of domain architecture, ABC transmembrane type-1 1 spans 81–365 (FTFYGILLYL…WAVQTWYDSL (285 aa)). Residues 99–122 (PLLLGRIIASYDPDNKTERSIAIY) lie on the Extracellular side of the membrane. Residues 123-146 (LGIGLCLLFIVRTLLLHPAIFGLH) traverse the membrane as a helical segment. Residues 147-195 (HIGMQMRIAMFSLIYKKTLKLSSRVLDKISIGQLVSLLSNNLNKFDEGL) are Cytoplasmic-facing. The helical transmembrane segment at 196–216 (ALAHFVWIAPLQVALLMGLIW) threads the bilayer. Residues 217–222 (ELLQAS) lie on the Extracellular side of the membrane. The chain crosses the membrane as a helical span at residues 223–243 (AFCGLGFLIVLALFQAGLGRM). Over 244 to 298 (MMKYRDQRAGKINERLVITSEMIENIQSVKAYCWEEAMEKMIENLRQTELKLTRK) the chain is Cytoplasmic. Residues 299–319 (AAYVRYFNSSAFFFSGFFVVF) form a helical membrane-spanning segment. Residues 320–339 (LSVLPYALIKGIALRKIFTT) are Extracellular-facing. Residues 340–358 (ISFCIVLRMAVTRQFPWAV) form a helical membrane-spanning segment. Residues 359–858 (QTWYDSLGAI…YLRYITLHKS (500 aa)) lie on the Cytoplasmic side of the membrane. ATP is bound by residues Trp401, Ser434, 458–465 (GSTGAGKT), and Gln493. The ABC transporter 1 domain occupies 423–646 (NGDDNLFFSN…RPDFSSKLMG (224 aa)). Cys524 carries S-palmitoyl cysteine lipidation. 2 positions are modified to phosphoserine: Ser549 and Ser660. The tract at residues 654 to 831 (SSERRNSILT…EEINEEDLKE (178 aa)) is disordered R region. Position 670 is a phosphoserine; by PKA (Ser670). Position 686 is a phosphoserine (Ser686). Lys688 participates in a covalent cross-link: Glycyl lysine isopeptide (Lys-Gly) (interchain with G-Cter in ubiquitin). Ser700 and Ser712 each carry phosphoserine. Thr717 is subject to Phosphothreonine. Phosphoserine occurs at positions 737, 753, 768, 790, 795, and 813. A helical transmembrane segment spans residues 859 to 879 (LIFVLIWCLVIFLAEVAASLV). The 297-residue stretch at 859–1155 (LIFVLIWCLV…AVNSSIDVDS (297 aa)) folds into the ABC transmembrane type-1 2 domain. Residues 880 to 918 (LLWLLGNTRFQDKGNSTYSRNNSYAVIITNTSSYYVFYI) are Extracellular-facing. Asn894, Asn900, and Asn909 each carry an N-linked (GlcNAc...) asparagine glycan. A discontinuously helical transmembrane segment spans residues 919–939 (YVGVADTLLALGFFRGLPLVH). The Cytoplasmic portion of the chain corresponds to 940–990 (TLITVSKILHHKMLHSVLQAPMSTLNTLKAGGILNRFSKDIAILDDLLPLT). Residues 991–1011 (IFDFIQLLLIVIGAIAVVSVL) traverse the membrane as a helical segment. Topologically, residues 1012–1013 (QP) are extracellular. Residues 1014-1034 (YIFLATVPVIAAFILLRAYFL) traverse the membrane as a helical segment. At 1035–1095 (QTSQQLKQLE…TASWFLYLST (61 aa)) the chain is on the cytoplasmic side. The chain crosses the membrane as a helical span at residues 1096–1116 (LRWFQMRIEMIFVIFFIAVTF). At 1117–1130 (ISILTTGEGEGTVG) the chain is on the extracellular side. A helical membrane pass occupies residues 1131–1151 (IILTLAMNIMSTLQWAVNSSI). The Cytoplasmic segment spans residues 1152-1481 (DVDSLMRSVS…TEEEVQETRL (330 aa)). An ABC transporter 2 domain is found at 1211 to 1444 (MTIKDLTAKY…KSLFRQAISH (234 aa)). ATP-binding positions include Tyr1220 and 1245–1252 (GRTGSGKS). Residues 1387–1481 (RALKQAFADC…TEEEVQETRL (95 aa)) are interaction with GORASP2. Residue Cys1396 is the site of S-palmitoyl cysteine attachment. 2 positions are modified to phosphoserine: Ser1445 and Ser1457. The tract at residues 1453–1481 (HRNSSKYKSRPQIASLKEETEEEVQETRL) is disordered. Residues 1471-1481 (ETEEEVQETRL) show a composition bias toward acidic residues. The short motif at 1479 to 1481 (TRL) is the PDZ-binding element.

This sequence belongs to the ABC transporter superfamily. ABCC family. CFTR transporter (TC 3.A.1.202) subfamily. Monomer; does not require oligomerization for channel activity. May form oligomers in the membrane. Interacts with SLC26A3, SLC26A6 and NHERF1. Interacts with SHANK2. Interacts with MYO6. Interacts (via C-terminus) with GOPC (via PDZ domain); this promotes CFTR internalization and thereby decreases channel activity. Interacts with SLC4A7 through NHERF1. Found in a complex with MYO5B and RAB11A. Interacts with ANO1. Interacts with SLC26A8. Interacts with AHCYL1; the interaction increases CFTR activity. Interacts with CSE1L. The core-glycosylated form interacts with GORASP2 (via PDZ GRASP-type 1 domain) in respone to ER stress. Interacts with MARCHF2; the interaction leads to CFTR ubiqtuitination and degradation. Interacts with ADGRG2. Post-translationally, N-glycosylated. In terms of processing, phosphorylated; cAMP treatment promotes phosphorylation and activates the channel. Dephosphorylation decreases the ATPase activity (in vitro). Phosphorylation at PKA sites activates the channel. Phosphorylation at PKC sites enhances the response to phosphorylation by PKA. Phosphorylated by AMPK; this inhibits channel activity. Ubiquitinated, leading to its degradation in the lysosome. Deubiquitination by USP10 in early endosomes enhances its endocytic recycling to the cell membrane. Ubiquitinated by RNF185 during ER stress. Ubiquitinated by MARCHF2.

The protein resides in the apical cell membrane. Its subcellular location is the early endosome membrane. It is found in the cell membrane. The protein localises to the recycling endosome membrane. It localises to the endoplasmic reticulum membrane. The protein resides in the nucleus. It carries out the reaction ATP + H2O + closed Cl(-) channel = ADP + phosphate + open Cl(-) channel.. The enzyme catalyses chloride(in) = chloride(out). It catalyses the reaction hydrogencarbonate(in) = hydrogencarbonate(out). The catalysed reaction is ATP + H2O = ADP + phosphate + H(+). Functionally, epithelial ion channel that plays an important role in the regulation of epithelial ion and water transport and fluid homeostasis. Mediates the transport of chloride ions across the cell membrane. Possesses an intrinsic ATPase activity and utilizes ATP to gate its channel; the passive flow of anions through the channel is gated by cycles of ATP binding and hydrolysis by the ATP-binding domains. The ion channel is also permeable to HCO(3)(-); selectivity depends on the extracellular chloride concentration. Exerts its function also by modulating the activity of other ion channels and transporters. Contributes to the regulation of the pH and the ion content of the epithelial fluid layer. Modulates the activity of the epithelial sodium channel (ENaC) complex, in part by regulating the cell surface expression of the ENaC complex. May regulate bicarbonate secretion and salvage in epithelial cells by regulating the transporter SLC4A7. Can inhibit the chloride channel activity of ANO1. Plays a role in the chloride and bicarbonate homeostasis during sperm epididymal maturation and capacitation. In Saimiri boliviensis boliviensis (Bolivian squirrel monkey), this protein is Cystic fibrosis transmembrane conductance regulator.